A 260-amino-acid polypeptide reads, in one-letter code: Ribonuclease HII (260 aa).

Residues 73 to 260 form the RNase H type-2 domain; the sequence is LHIAGIDEAG…APVQQQLDIV (188 aa). A divalent metal cation is bound by residues aspartate 79, glutamate 80, and aspartate 171.

Belongs to the RNase HII family. Mn(2+) is required as a cofactor. Requires Mg(2+) as cofactor.

The protein resides in the cytoplasm. The catalysed reaction is Endonucleolytic cleavage to 5'-phosphomonoester.. Functionally, endonuclease that specifically degrades the RNA of RNA-DNA hybrids. This is Ribonuclease HII from Desulfitobacterium hafniense (strain Y51).